Consider the following 472-residue polypeptide: L-aspartate oxidase (472 aa).

FAD-binding positions include 7 to 10, S29, 36 to 37, 42 to 43, and D191; these read SGIA, ST, and GG. The active-site Proton donor/acceptor is the R257. Residues E337 and 353-354 contribute to the FAD site; that span reads SL.

The protein belongs to the FAD-dependent oxidoreductase 2 family. NadB subfamily. Monomer. FAD serves as cofactor.

It localises to the cytoplasm. It catalyses the reaction L-aspartate + O2 = iminosuccinate + H2O2. Its pathway is cofactor biosynthesis; NAD(+) biosynthesis; iminoaspartate from L-aspartate (oxidase route): step 1/1. In terms of biological role, catalyzes the oxidation of L-aspartate to iminoaspartate, the first step in the de novo biosynthesis of NAD(+). Can also use L-asparagine, but not L-phenylalanine, L-glutamate, glycine, L-proline, L-alanine and D-aspartate. This Sulfurisphaera tokodaii (strain DSM 16993 / JCM 10545 / NBRC 100140 / 7) (Sulfolobus tokodaii) protein is L-aspartate oxidase.